Consider the following 366-residue polypeptide: Isopentenyl-diphosphate delta-isomerase (366 aa).

6 to 7 (RK) is a binding site for substrate. FMN-binding positions include T63, 64–66 (GMT), S94, and N123. Residue 94–96 (SQR) coordinates substrate. Residue Q158 participates in substrate binding. E159 contributes to the Mg(2+) binding site. FMN is bound by residues K191, S216, T221, 273–275 (GIR), and 294–295 (AN).

Belongs to the IPP isomerase type 2 family. Homooctamer. Dimer of tetramers. It depends on FMN as a cofactor. NADPH serves as cofactor. The cofactor is Mg(2+).

It localises to the cytoplasm. It catalyses the reaction isopentenyl diphosphate = dimethylallyl diphosphate. In terms of biological role, involved in the biosynthesis of isoprenoids. Catalyzes the 1,3-allylic rearrangement of the homoallylic substrate isopentenyl (IPP) to its allylic isomer, dimethylallyl diphosphate (DMAPP). This is Isopentenyl-diphosphate delta-isomerase from Metallosphaera sedula (strain ATCC 51363 / DSM 5348 / JCM 9185 / NBRC 15509 / TH2).